The chain runs to 599 residues: MSFGTRISRALRFLEIPVKNRASVNFLRNPDLQPIKSVNQTWGFWSNFAYWGVLSFNVGMWIGGSSALTVGLSYSETIGAFIIADLLTILFALANSCPGYDWKVGFTLAQRFVFGIYGSALGIIIRILMSIVYYGSNAWLGGLCVNMILDSWSHHYLHLPNTLSSKVAMTTKELIGFIIFHILTAFCYFMKPYHMNYILIWSCVGTFFAMLGMVIYLTKSAHGVGDLFTSTHSTVTGSKKAWAWVYTISYWYGSVSPGCTNQSDFSRFGSSNCAIWTGTIVALLIPATLIPVFGIIGASACEKLYGQTFWMPMDIFDNWLTTNYSAGARAATFFCGFCFVMSQISYTISNCGFASGMDLAGLLPKYVDIKRGAIFAACVSWACLPWNFYNSSSTFLTVMSSFGVVMTPIITVMICDNFLIRKRQYSVTNAFVLKGEYYFTKGVNWRAIVAWVCGMAPGLPGIAWEVNNDYFHNTGIINFFYGDSFFSFLISFFVYWGLCLLFPFKITVKHDDKDYYGAFTDEEARKKGMVPYSEISEEEIRAYTLGECFTSGHEYKPESSDDELPELTKTSSENTKVFEIVHQKDNEKESSTSSEKQIA.

Transmembrane regions (helical) follow at residues 42–62 (WGFWSNFAYWGVLSFNVGMWI), 78–98 (IGAFIIADLLTILFALANSCP), 112–132 (FVFGIYGSALGIIIRILMSIV), 174–194 (LIGFIIFHILTAFCYFMKPYH), 197–217 (YILIWSCVGTFFAMLGMVIYL), 280–300 (IVALLIPATLIPVFGIIGASA), 333–353 (FFCGFCFVMSQISYTISNCGF), 372–392 (GAIFAACVSWACLPWNFYNSS), 395–415 (FLTVMSSFGVVMTPIITVMIC), 447–467 (AIVAWVCGMAPGLPGIAWEVN), and 484–504 (SFFSFLISFFVYWGLCLLFPF). Residues 553–599 (HEYKPESSDDELPELTKTSSENTKVFEIVHQKDNEKESSTSSEKQIA) are disordered. 2 positions are modified to phosphoserine: Ser-560 and Ser-572. Over residues 579–590 (EIVHQKDNEKES) the composition is skewed to basic and acidic residues.

The protein belongs to the purine-cytosine permease (2.A.39) family.

The protein localises to the membrane. Functionally, low affinity thiamine transporter responsible for intake of thiamine. It is possible that the primary function is the uptake of closely related compounds and that thiamine transport is a secondary activity of these proteins. The sequence is that of Thiamine transporter THI72 (THI72) from Saccharomyces cerevisiae (strain ATCC 204508 / S288c) (Baker's yeast).